The sequence spans 274 residues: Large ribosomal subunit protein uL2 (274 aa).

2 disordered regions span residues 28–55 (APHA…RHVG) and 224–274 (VAMN…RRRK).

The protein belongs to the universal ribosomal protein uL2 family. Part of the 50S ribosomal subunit. Forms a bridge to the 30S subunit in the 70S ribosome.

In terms of biological role, one of the primary rRNA binding proteins. Required for association of the 30S and 50S subunits to form the 70S ribosome, for tRNA binding and peptide bond formation. It has been suggested to have peptidyltransferase activity; this is somewhat controversial. Makes several contacts with the 16S rRNA in the 70S ribosome. This is Large ribosomal subunit protein uL2 from Pseudomonas putida (strain GB-1).